Here is a 378-residue protein sequence, read N- to C-terminus: Mas-related G-protein coupled receptor MRG (378 aa).

The Extracellular portion of the chain corresponds to 1–77; the sequence is MVWGKICWFS…VGQQALPLNI (77 aa). N-linked (GlcNAc...) asparagine glycans are attached at residues Asn-54 and Asn-57. A helical transmembrane segment spans residues 78–101; the sequence is IAPKAVLVSLCGVLLNGTVFWLLC. Topologically, residues 102–109 are cytoplasmic; that stretch reads CGATNPYM. A helical transmembrane segment spans residues 110 to 136; that stretch reads VYILHLVAADVIYLCCSAVGFLQVTLL. Residues 137–154 are Extracellular-facing; the sequence is TYHGVVFFIPDFLAILSP. Residues 155–169 form a helical membrane-spanning segment; it reads FSFEVCLCLLVAIST. The Cytoplasmic segment spans residues 170–191; sequence ERCVCVLFPIWYRCHRPKYTSN. Residues 192 to 207 traverse the membrane as a helical segment; it reads VVCTLIWGLPFCINIV. The Extracellular portion of the chain corresponds to 208–221; sequence KSLFLTYWKHVKAC. Residues 222 to 248 traverse the membrane as a helical segment; sequence VIFLKLSGLFHAILSLVMCVSSLTLLI. Topologically, residues 249-264 are cytoplasmic; sequence RFLCCSQQQKATRVYA. A helical transmembrane segment spans residues 265 to 286; it reads VVQISAPMFLLWALPLSVAPLI. Over 287 to 297 the chain is Extracellular; that stretch reads TDFKMFVTTSY. A helical transmembrane segment spans residues 298–317; sequence LISLFLIINSSANPIIYFFV. At 318–378 the chain is on the cytoplasmic side; it reads GSLRKKRLKE…PREHRVDVET (61 aa). The tract at residues 344 to 378 is disordered; sequence GRNKKAAGIDPMEQPHSTQHVENLLPREHRVDVET. Residues 368 to 378 show a composition bias toward basic and acidic residues; it reads LPREHRVDVET.

This sequence belongs to the G-protein coupled receptor 1 family. Mas subfamily.

It is found in the cell membrane. The polypeptide is Mas-related G-protein coupled receptor MRG (MAS1L) (Homo sapiens (Human)).